A 176-amino-acid polypeptide reads, in one-letter code: Mitochondrial inner membrane protein Mpv17 (176 aa).

4 consecutive transmembrane segments (helical) span residues 18 to 38, 53 to 73, 94 to 114, and 131 to 151; these read VQVL…QQLV, TMVS…YKVL, GGFA…LNGM, and LITN…LVPL.

Belongs to the peroxisomal membrane protein PXMP2/4 family. In terms of tissue distribution, high levels in heart, kidney, and brain, intermediate levels in testis, and low levels in liver and spleen.

The protein resides in the mitochondrion inner membrane. Non-selective channel that modulates the membrane potential under normal conditions and oxidative stress, and is involved in mitochondrial homeostasis. Involved in mitochondrial deoxynucleoside triphosphates (dNTP) pool homeostasis and mitochondrial DNA (mtDNA) maintenance. May be involved in the regulation of reactive oxygen species metabolism and the control of oxidative phosphorylation. This chain is Mitochondrial inner membrane protein Mpv17, found in Mus musculus (Mouse).